Reading from the N-terminus, the 2304-residue chain is Protein Ycf2 (2304 aa).

ATP is bound at residue 1637–1644; it reads GSIGTGRS.

It belongs to the Ycf2 family.

The protein resides in the plastid. The protein localises to the chloroplast stroma. Probable ATPase of unknown function. Its presence in a non-photosynthetic plant (Epifagus virginiana) and experiments in tobacco indicate that it has an essential function which is probably not related to photosynthesis. This chain is Protein Ycf2, found in Amborella trichopoda.